Here is a 403-residue protein sequence, read N- to C-terminus: Na(+)/H(+) antiporter NhaH (403 aa).

Transmembrane regions (helical) follow at residues 7–27, 34–54, 99–119, 125–145, 168–188, 196–216, 228–245, 250–272, 282–302, 311–331, 345–365, and 373–393; these read VFIQILLLLAISVTVIAIAKL, VALVLVGLVLGLTQLPFIEEA, LAFLGTFISSLTIGAASYFLL, VAFTFAALMSATDPISVLSIF, IAVVLFKIASIYLLTYIEMGW, FMFLKFAVGGALVGLILGYVF, LEVAFSALLFFGSYFIAE, SGVIAVVVGGFVFGDYGAKIGMS, FWDSVTLLANALIFLMVGLEI, WGYIVGAIAIVLVGRTIAVYI, ILINWGGLRGSLSIALALSLP, and QVLLLTFSVVLFSLIVQGLTL.

The protein belongs to the monovalent cation:proton antiporter 1 (CPA1) transporter (TC 2.A.36) family.

It localises to the cell membrane. Its function is as follows. Na(+)/H(+) antiporter that extrudes sodium in exchange for external protons. Can also transport lithium. The protein is Na(+)/H(+) antiporter NhaH (nhaH) of Halobacillus aidingensis.